The sequence spans 269 residues: Diaminopimelate epimerase (269 aa).

N20 and N63 together coordinate substrate. The active-site Proton donor is the C72. Residues 73–74 (GN), N179, and 197–198 (ER) each bind substrate. Residue C207 is the Proton acceptor of the active site. 208-209 (GT) lines the substrate pocket.

The protein belongs to the diaminopimelate epimerase family. Homodimer.

The protein resides in the cytoplasm. It catalyses the reaction (2S,6S)-2,6-diaminopimelate = meso-2,6-diaminopimelate. It participates in amino-acid biosynthesis; L-lysine biosynthesis via DAP pathway; DL-2,6-diaminopimelate from LL-2,6-diaminopimelate: step 1/1. Functionally, catalyzes the stereoinversion of LL-2,6-diaminopimelate (L,L-DAP) to meso-diaminopimelate (meso-DAP), a precursor of L-lysine and an essential component of the bacterial peptidoglycan. This Chlamydia muridarum (strain MoPn / Nigg) protein is Diaminopimelate epimerase.